A 192-amino-acid chain; its full sequence is Der GTPase-activating protein YihI (192 aa).

The disordered stretch occupies residues 1-80 (MSRTKKTRRI…KAAVKEVKDP (80 aa)). Basic and acidic residues-rich tracts occupy residues 9 to 25 (RITD…KPEQ), 37 to 48 (TRYELDAKAREE), and 65 to 80 (DPAE…VKDP).

Belongs to the YihI family. In terms of assembly, interacts with Der.

Its function is as follows. A GTPase-activating protein (GAP) that modifies Der/EngA GTPase function. May play a role in ribosome biogenesis. The protein is Der GTPase-activating protein YihI of Actinobacillus pleuropneumoniae serotype 5b (strain L20).